Reading from the N-terminus, the 405-residue chain is Tyrosine--tRNA ligase (405 aa).

The 'HIGH' region signature appears at 41–50 (PTAPDLHLGH). The 'KMSKS' region signature appears at 225–229 (KMSKS). Residue Lys-228 coordinates ATP. Positions 342-404 (EPLLVWVLSK…GKKGKFLKII (63 aa)) constitute an S4 RNA-binding domain.

The protein belongs to the class-I aminoacyl-tRNA synthetase family. TyrS type 2 subfamily. Homodimer.

The protein resides in the cytoplasm. The enzyme catalyses tRNA(Tyr) + L-tyrosine + ATP = L-tyrosyl-tRNA(Tyr) + AMP + diphosphate + H(+). In terms of biological role, catalyzes the attachment of tyrosine to tRNA(Tyr) in a two-step reaction: tyrosine is first activated by ATP to form Tyr-AMP and then transferred to the acceptor end of tRNA(Tyr). The chain is Tyrosine--tRNA ligase from Leptospira interrogans serogroup Icterohaemorrhagiae serovar Lai (strain 56601).